Consider the following 340-residue polypeptide: Anthranilate phosphoribosyltransferase (340 aa).

5-phospho-alpha-D-ribose 1-diphosphate-binding positions include glycine 79, 82 to 83, serine 87, 89 to 92, 107 to 115, and serine 119; these read GD, NIST, and KHGNRSVSS. Residue glycine 79 coordinates anthranilate. Serine 91 provides a ligand contact to Mg(2+). Residue asparagine 110 coordinates anthranilate. Arginine 165 serves as a coordination point for anthranilate. Aspartate 224 and glutamate 225 together coordinate Mg(2+).

The protein belongs to the anthranilate phosphoribosyltransferase family. As to quaternary structure, homodimer. Mg(2+) is required as a cofactor.

It carries out the reaction N-(5-phospho-beta-D-ribosyl)anthranilate + diphosphate = 5-phospho-alpha-D-ribose 1-diphosphate + anthranilate. Its pathway is amino-acid biosynthesis; L-tryptophan biosynthesis; L-tryptophan from chorismate: step 2/5. Functionally, catalyzes the transfer of the phosphoribosyl group of 5-phosphorylribose-1-pyrophosphate (PRPP) to anthranilate to yield N-(5'-phosphoribosyl)-anthranilate (PRA). The protein is Anthranilate phosphoribosyltransferase of Oceanobacillus iheyensis (strain DSM 14371 / CIP 107618 / JCM 11309 / KCTC 3954 / HTE831).